The sequence spans 295 residues: MKQYLQVTKPGIIFGNLISVIGGFLLASKGSLDVPLFILTMAGVSLVVASGCVFNNYIDRDIDCIMERTKNRALVRGLIAPGVSLWYASALGVAGIALLYWAANPLAALLAVLGFIVYVGVYSLYMKRHSVYGTLVGSLSGAAPPVIGYCAVSGQFDSGALILLAIFSLWQMPHSYAIAIFRFKDYQAANIPVLPVVKGIVVAKHHITLYILAFMVPTLMLFLGGYAGYKYLIVATAVSVWWLGMALSGYKQAVDDSLWARKLFMFSIVTITCLSVMMSVDFQPDATPVLVSMLP.

A run of 9 helical transmembrane segments spans residues 7 to 27, 34 to 54, 78 to 98, 106 to 126, 131 to 151, 161 to 181, 207 to 227, 228 to 248, and 263 to 283; these read VTKP…FLLA, VPLF…GCVF, LIAP…GIAL, LAAL…SLYM, VYGT…GYCA, LILL…IAIF, ITLY…GGYA, GYKY…MALS, and LFMF…VDFQ.

The protein belongs to the UbiA prenyltransferase family. Protoheme IX farnesyltransferase subfamily.

It is found in the cell inner membrane. It carries out the reaction heme b + (2E,6E)-farnesyl diphosphate + H2O = Fe(II)-heme o + diphosphate. It participates in porphyrin-containing compound metabolism; heme O biosynthesis; heme O from protoheme: step 1/1. Functionally, converts heme B (protoheme IX) to heme O by substitution of the vinyl group on carbon 2 of heme B porphyrin ring with a hydroxyethyl farnesyl side group. In Aeromonas salmonicida (strain A449), this protein is Protoheme IX farnesyltransferase.